The following is a 451-amino-acid chain: Eukaryotic translation initiation factor 3 subunit E (451 aa).

The region spanning 256-425 (TDLFFSPAYI…GTVIMNHPPQ (170 aa)) is the PCI domain.

Belongs to the eIF-3 subunit E family. In terms of assembly, component of the eukaryotic translation initiation factor 3 (eIF-3) complex.

It is found in the cytoplasm. Functionally, component of the eukaryotic translation initiation factor 3 (eIF-3) complex, which is involved in protein synthesis of a specialized repertoire of mRNAs and, together with other initiation factors, stimulates binding of mRNA and methionyl-tRNAi to the 40S ribosome. The eIF-3 complex specifically targets and initiates translation of a subset of mRNAs involved in cell proliferation. In Aspergillus oryzae (strain ATCC 42149 / RIB 40) (Yellow koji mold), this protein is Eukaryotic translation initiation factor 3 subunit E (int6).